We begin with the raw amino-acid sequence, 617 residues long: Dihydroxy-acid dehydratase (617 aa).

Residue D81 coordinates Mg(2+). Residue C122 participates in [2Fe-2S] cluster binding. Mg(2+) is bound by residues D123 and K124. At K124 the chain carries N6-carboxylysine. Position 195 (C195) interacts with [2Fe-2S] cluster. E491 is a binding site for Mg(2+). S517 (proton acceptor) is an active-site residue.

This sequence belongs to the IlvD/Edd family. In terms of assembly, homodimer. It depends on [2Fe-2S] cluster as a cofactor. Mg(2+) is required as a cofactor.

It carries out the reaction (2R)-2,3-dihydroxy-3-methylbutanoate = 3-methyl-2-oxobutanoate + H2O. The enzyme catalyses (2R,3R)-2,3-dihydroxy-3-methylpentanoate = (S)-3-methyl-2-oxopentanoate + H2O. It functions in the pathway amino-acid biosynthesis; L-isoleucine biosynthesis; L-isoleucine from 2-oxobutanoate: step 3/4. It participates in amino-acid biosynthesis; L-valine biosynthesis; L-valine from pyruvate: step 3/4. In terms of biological role, functions in the biosynthesis of branched-chain amino acids. Catalyzes the dehydration of (2R,3R)-2,3-dihydroxy-3-methylpentanoate (2,3-dihydroxy-3-methylvalerate) into 2-oxo-3-methylpentanoate (2-oxo-3-methylvalerate) and of (2R)-2,3-dihydroxy-3-methylbutanoate (2,3-dihydroxyisovalerate) into 2-oxo-3-methylbutanoate (2-oxoisovalerate), the penultimate precursor to L-isoleucine and L-valine, respectively. In Rhodospirillum rubrum (strain ATCC 11170 / ATH 1.1.1 / DSM 467 / LMG 4362 / NCIMB 8255 / S1), this protein is Dihydroxy-acid dehydratase.